The chain runs to 173 residues: Bifunctional protein PyrR (173 aa).

The short motif at 93–105 is the PRPP-binding element; that stretch reads VILVDDVLYTGRT.

This sequence belongs to the purine/pyrimidine phosphoribosyltransferase family. PyrR subfamily. In terms of assembly, homodimer and homohexamer; in equilibrium.

The catalysed reaction is UMP + diphosphate = 5-phospho-alpha-D-ribose 1-diphosphate + uracil. In terms of biological role, regulates transcriptional attenuation of the pyrimidine nucleotide (pyr) operon by binding in a uridine-dependent manner to specific sites on pyr mRNA. This disrupts an antiterminator hairpin in the RNA and favors formation of a downstream transcription terminator, leading to a reduced expression of downstream genes. Also displays a weak uracil phosphoribosyltransferase activity which is not physiologically significant. This chain is Bifunctional protein PyrR, found in Streptococcus thermophilus (strain ATCC BAA-491 / LMD-9).